A 478-amino-acid chain; its full sequence is Dynein regulatory complex subunit 4 (478 aa).

Over residues 1–12 (MAPKRRGKKGKA) the composition is skewed to basic residues. Positions 1 to 32 (MAPKRRGKKGKAKGNAVVDGVAPEDMSKEQVE) are disordered. A regulates microtubule-binding region spans residues 1-114 (MAPKRRGKKG…LLYEHQNNLA (114 aa)). Coiled coils occupy residues 24–201 (EDMS…DELD) and 243–427 (NNLA…LARV). A microtubule-binding region spans residues 115–258 (EVKTEGTVVM…NSLKEQMEDM (144 aa)). Positions 357 to 478 (QQKTGFKNLV…GPAGLVGAPT (122 aa)) are interaction with SMO.

The protein belongs to the DRC4 family. In terms of assembly, component of the nexin-dynein regulatory complex (N-DRC). Interacts with microtubules. Interacts with SMO. Interacts (via coiled-coil domains) with RAB3B (in GTP-bound form). Interacts with DRC1. Interacts with DRC7.

The protein localises to the cytoplasm. It is found in the cytoskeleton. The protein resides in the cell projection. It localises to the cilium. Its subcellular location is the flagellum. The protein localises to the cilium axoneme. It is found in the cilium basal body. The protein resides in the golgi apparatus. It localises to the flagellum axoneme. Its function is as follows. Component of the nexin-dynein regulatory complex (N-DRC), a key regulator of ciliary/flagellar motility which maintains the alignment and integrity of the distal axoneme and regulates microtubule sliding in motile axonemes. Plays an important role in the assembly of the N-DRC linker. Plays dual roles at both the primary (or non-motile) cilia to regulate hedgehog signaling and in motile cilia to coordinate cilia movement. Required for proper motile cilia functioning. Positively regulates ciliary smoothened (SMO)-dependent Hedgehog (Hh) signaling pathway by facilitating the trafficking of SMO into the cilium and the stimulation of SMO activity in a GRK2-dependent manner. This chain is Dynein regulatory complex subunit 4 (Gas8), found in Rattus norvegicus (Rat).